The sequence spans 72 residues: Translation initiation factor IF-1 (72 aa).

The region spanning 1–72 (MAKEDNFELE…SKGRITYRAR (72 aa)) is the S1-like domain.

Belongs to the IF-1 family. As to quaternary structure, component of the 30S ribosomal translation pre-initiation complex which assembles on the 30S ribosome in the order IF-2 and IF-3, IF-1 and N-formylmethionyl-tRNA(fMet); mRNA recruitment can occur at any time during PIC assembly.

The protein localises to the cytoplasm. In terms of biological role, one of the essential components for the initiation of protein synthesis. Stabilizes the binding of IF-2 and IF-3 on the 30S subunit to which N-formylmethionyl-tRNA(fMet) subsequently binds. Helps modulate mRNA selection, yielding the 30S pre-initiation complex (PIC). Upon addition of the 50S ribosomal subunit IF-1, IF-2 and IF-3 are released leaving the mature 70S translation initiation complex. The polypeptide is Translation initiation factor IF-1 (Saccharophagus degradans (strain 2-40 / ATCC 43961 / DSM 17024)).